Here is a 245-residue protein sequence, read N- to C-terminus: 1-(5-phosphoribosyl)-5-[(5-phosphoribosylamino)methylideneamino] imidazole-4-carboxamide isomerase (245 aa).

Asp7 functions as the Proton acceptor in the catalytic mechanism. Catalysis depends on Asp129, which acts as the Proton donor.

It belongs to the HisA/HisF family.

It localises to the cytoplasm. It carries out the reaction 1-(5-phospho-beta-D-ribosyl)-5-[(5-phospho-beta-D-ribosylamino)methylideneamino]imidazole-4-carboxamide = 5-[(5-phospho-1-deoxy-D-ribulos-1-ylimino)methylamino]-1-(5-phospho-beta-D-ribosyl)imidazole-4-carboxamide. It functions in the pathway amino-acid biosynthesis; L-histidine biosynthesis; L-histidine from 5-phospho-alpha-D-ribose 1-diphosphate: step 4/9. In Salmonella heidelberg (strain SL476), this protein is 1-(5-phosphoribosyl)-5-[(5-phosphoribosylamino)methylideneamino] imidazole-4-carboxamide isomerase.